The primary structure comprises 416 residues: Phosphoglycerate kinase (416 aa).

Residues 24-26 (DLN), Arg40, 63-66 (HLGR), Arg122, and Arg162 contribute to the substrate site. ATP-binding positions include Lys212, Gly300, Glu331, and 360-363 (GGDS).

The protein belongs to the phosphoglycerate kinase family. As to quaternary structure, monomer.

It is found in the cytoplasm. The catalysed reaction is (2R)-3-phosphoglycerate + ATP = (2R)-3-phospho-glyceroyl phosphate + ADP. It participates in carbohydrate degradation; glycolysis; pyruvate from D-glyceraldehyde 3-phosphate: step 2/5. The chain is Phosphoglycerate kinase from Mycobacterium ulcerans (strain Agy99).